We begin with the raw amino-acid sequence, 229 residues long: Endonuclease V (229 aa).

Mg(2+)-binding residues include Asp-43 and Asp-111.

It belongs to the endonuclease V family. Requires Mg(2+) as cofactor.

It localises to the cytoplasm. The catalysed reaction is Endonucleolytic cleavage at apurinic or apyrimidinic sites to products with a 5'-phosphate.. Its function is as follows. DNA repair enzyme involved in the repair of deaminated bases. Selectively cleaves double-stranded DNA at the second phosphodiester bond 3' to a deoxyinosine leaving behind the intact lesion on the nicked DNA. This Rippkaea orientalis (strain PCC 8801 / RF-1) (Cyanothece sp. (strain PCC 8801)) protein is Endonuclease V.